The sequence spans 530 residues: Chaperone Ric-8A (530 aa).

S435 carries the phosphoserine modification. 2 positions are modified to phosphothreonine: T440 and T442. 4 positions are modified to phosphoserine: S501, S522, S523, and S527.

The protein belongs to the synembryn family. Interacts with GDP-bound G alpha proteins GNAI1, GNAO1 and GNAQ, and with GNA13 with lower affinity. Does not interact with G-alpha proteins when they are in complex with subunits beta and gamma. Interacts (via C-terminus) with RGS14; the interaction stimulates the dissociation of the complex between RGS14 and the active GTP-bound form of GNAI1. Interacts with NCS1; interaction is favored in the absence of Ca(2+) and myristoylation of NCS1 is not required. As to expression, expressed in neurons and neurites of the CA1 and CA2 subregions of the hippocampus (at protein level). In adult brain, it is expressed in the neocortex, hippocampus and cerebellum as well as in the pineal gland and ependymal layer.

The protein resides in the cytoplasm. The protein localises to the cell cortex. In terms of biological role, chaperone that specifically binds and folds nascent G alpha proteins prior to G protein heterotrimer formation, promoting their stability and activity: folds GNAI1, GNAO1, GNA13 and GNAQ. Does not fold G(s) G-alpha proteins GNAS nor GNAL. Also acts as a guanine nucleotide exchange factor (GEF) for G alpha proteins by stimulating exchange of bound GDP for free GTP. Involved in regulation of microtubule pulling forces during mitotic movement of chromosomes by stimulating G(i)-alpha protein (GNAI1), possibly leading to release G(i)-alpha-GTP and NuMA proteins from the NuMA-GPSM2-G(i)-alpha-GDP complex. Also acts as an activator for G(q)-alpha (GNAQ) protein by enhancing the G(q)-coupled receptor-mediated ERK activation. The protein is Chaperone Ric-8A of Mus musculus (Mouse).